A 161-amino-acid chain; its full sequence is Ragulator complex protein LAMTOR1 (161 aa).

The segment at 1-43 (MGCCYSSENEDSDQDREERKLLLDPSSPPTKALNGAEPNYHSL) is disordered. Gly2 is lipidated: N-myristoyl glycine. Residues Cys3 and Cys4 are each lipidated (S-palmitoyl cysteine). Residue Lys20 forms a Glycyl lysine isopeptide (Lys-Gly) (interchain with G-Cter in ubiquitin) linkage. Phosphoserine is present on Ser27. Residue Lys31 forms a Glycyl lysine isopeptide (Lys-Gly) (interchain with G-Cter in ubiquitin) linkage. 2 positions are modified to phosphoserine: Ser42 and Ser56. Lys60 participates in a covalent cross-link: Glycyl lysine isopeptide (Lys-Gly) (interchain with G-Cter in ubiquitin). Position 98 is a phosphoserine (Ser98). Residues Lys103 and Lys104 each participate in a glycyl lysine isopeptide (Lys-Gly) (interchain with G-Cter in ubiquitin) cross-link. The interaction with LAMTOR2 and LAMTOR3 stretch occupies residues 121–161 (SEPIPFSDLQQVSRIAAYAYSALSQIRVDAKEELVVQFGIP). Phosphoserine is present on Ser141.

This sequence belongs to the LAMTOR1 family. In terms of assembly, part of the Ragulator complex composed of LAMTOR1, LAMTOR2, LAMTOR3, LAMTOR4 and LAMTOR5. LAMTOR4 and LAMTOR5 form a heterodimer that interacts, through LAMTOR1, with a LAMTOR2, LAMTOR3 heterodimer. Interacts with LAMTOR2 and LAMTOR3; the interaction is direct. The Ragulator complex interacts with both the mTORC1 complex and heterodimers constituted of the Rag GTPases RagA/RRAGA, RagB/RRAGB, RagC/RRAGC and RagD/RRAGD; regulated by amino acid availability. The Ragulator complex interacts with SLC38A9; the probable amino acid sensor. Component of the lysosomal folliculin complex (LFC), composed of FLCN, FNIP1 (or FNIP2), RagA/RRAGA or RagB/RRAGB GDP-bound, RagC/RRAGC or RagD/RRAGD GTP-bound, and Ragulator. Associates with the lysosomal V-ATPase complex; interaction promotes the guanine nucleotide exchange factor (GEF) of the Ragulator complex. Interacts with MMP14. Interacts with CDKN1B; prevents the interaction of CDKN1B with RHOA leaving RHOA in a form accessible to activation by ARHGEF2. Interacts with PIP4P1. N-terminal myristoylation and palmitoylation mediates its recruitment to lysosome membranes, thereby promoting localization of the Ragulator complex to lysosomes. N-myristoylation by NMT1 is required for palmitoylation at Cys-3 and Cys-4. May be palmitoylated by ZDHHC3. Post-translationally, ubiquitinated at Lys-60, Lys-103 and Lys-104 by UBE3A, promoting its degradation by the proteasome. Ubiquitination at Lys-20 impairs the association with the lysosomal V-ATPase complex. Deubiquitination at Lys-20 by USP32 promotes the association with the lysosomal V-ATPase complex and subsequent activation of the mTORC1 complex.

It is found in the lysosome membrane. Its subcellular location is the late endosome membrane. Its function is as follows. Key component of the Ragulator complex, a multiprotein complex involved in amino acid sensing and activation of mTORC1, a signaling complex promoting cell growth in response to growth factors, energy levels, and amino acids. Activated by amino acids through a mechanism involving the lysosomal V-ATPase, the Ragulator plays a dual role for the small GTPases Rag (RagA/RRAGA, RagB/RRAGB, RagC/RRAGC and/or RagD/RRAGD): it (1) acts as a guanine nucleotide exchange factor (GEF), activating the small GTPases Rag and (2) mediates recruitment of Rag GTPases to the lysosome membrane. Activated Ragulator and Rag GTPases function as a scaffold recruiting mTORC1 to lysosomes where it is in turn activated. LAMTOR1 is directly responsible for anchoring the Ragulator complex to the lysosomal membrane. LAMTOR1 wraps around the other subunits of the Ragulator complex to hold them in place and interacts with the Rag GTPases, thereby playing a key role in the recruitment of the mTORC1 complex to lysosomes. Also involved in the control of embryonic stem cells differentiation via non-canonical RagC/RRAGC and RagD/RRAGD activation: together with FLCN, it is necessary to recruit and activate RagC/RRAGC and RagD/RRAGD at the lysosomes, and to induce exit of embryonic stem cells from pluripotency via non-canonical, mTOR-independent TFE3 inactivation. Also required for late endosomes/lysosomes biogenesis it may regulate both the recycling of receptors through endosomes and the MAPK signaling pathway through recruitment of some of its components to late endosomes. May be involved in cholesterol homeostasis regulating LDL uptake and cholesterol release from late endosomes/lysosomes. May also play a role in RHOA activation. This Homo sapiens (Human) protein is Ragulator complex protein LAMTOR1.